A 123-amino-acid chain; its full sequence is Small ribosomal subunit protein uS13 (123 aa).

The disordered stretch occupies residues 99-123; sequence RGQRTRTNARTRKGPRRTVGVKRKK.

This sequence belongs to the universal ribosomal protein uS13 family. In terms of assembly, part of the 30S ribosomal subunit. Forms a loose heterodimer with protein S19. Forms two bridges to the 50S subunit in the 70S ribosome.

Located at the top of the head of the 30S subunit, it contacts several helices of the 16S rRNA. In the 70S ribosome it contacts the 23S rRNA (bridge B1a) and protein L5 of the 50S subunit (bridge B1b), connecting the 2 subunits; these bridges are implicated in subunit movement. Contacts the tRNAs in the A and P-sites. The chain is Small ribosomal subunit protein uS13 from Carboxydothermus hydrogenoformans (strain ATCC BAA-161 / DSM 6008 / Z-2901).